The sequence spans 588 residues: Aspartate--tRNA ligase (588 aa).

Residue Glu-174 coordinates L-aspartate. Residues 198 to 201 are aspartate; sequence QLFK. Arg-220 serves as a coordination point for L-aspartate. ATP is bound by residues 220–222 and Gln-229; that span reads RDE. Residue His-448 participates in L-aspartate binding. Glu-482 contributes to the ATP binding site. Residue Arg-489 participates in L-aspartate binding. 534 to 537 provides a ligand contact to ATP; the sequence is GLDR.

The protein belongs to the class-II aminoacyl-tRNA synthetase family. Type 1 subfamily. As to quaternary structure, homodimer.

The protein localises to the cytoplasm. The enzyme catalyses tRNA(Asp) + L-aspartate + ATP = L-aspartyl-tRNA(Asp) + AMP + diphosphate. In terms of biological role, catalyzes the attachment of L-aspartate to tRNA(Asp) in a two-step reaction: L-aspartate is first activated by ATP to form Asp-AMP and then transferred to the acceptor end of tRNA(Asp). The polypeptide is Aspartate--tRNA ligase (Exiguobacterium sibiricum (strain DSM 17290 / CCUG 55495 / CIP 109462 / JCM 13490 / 255-15)).